The primary structure comprises 315 residues: uncharacterized protein (315 aa).

Residues 1-38 (MDVLLSLPQPELFKTTVIPFLANRNIIKSEAILSNLHS) lie on the Cytoplasmic side of the membrane. A helical membrane pass occupies residues 39 to 59 (IFYVAIFYHIWFLFGKWILFP). The Lumenal portion of the chain corresponds to 60 to 101 (HLVKWKLDYDQKHNVKKDEKTTSERQAQHYKKKYTSLINQSS). The region spanning 95–302 (SLINQSSVHL…MVSVAAKVLK (208 aa)) is the TLC domain. Residues 102–122 (VHLISLLQSIVVLYYSLKFLL) form a helical membrane-spanning segment. The Cytoplasmic segment spans residues 123–144 (DPKASAEPYQTSHSRVFTENRD). The chain crosses the membrane as a helical span at residues 145-165 (TQVICIFAIGYFVWDIYISTM). The Lumenal segment spans residues 166-170 (YSTFP). Residues 171–190 (FVVHGIISTVVFCIGLKPYI) traverse the membrane as a helical segment. The Cytoplasmic portion of the chain corresponds to 191 to 225 (QYYAPVFLMFELSNPSLNFRWFGIKFLPQKSKFCS). The chain crosses the membrane as a helical span at residues 226 to 246 (LLLLLNNLTLMVVFFAARIAW). Residues 247–264 (GWFQIGKLCYDFYQVRNE) are Lumenal-facing. Residues 265 to 285 (PGFLVFDTIVILAGNFVLDIL) traverse the membrane as a helical segment. Residues 286 to 315 (NVIWFSTMVSVAAKVLKKGESVDKVTKNEQ) are Cytoplasmic-facing.

The protein localises to the endoplasmic reticulum membrane. This is an uncharacterized protein from Saccharomyces cerevisiae (strain ATCC 204508 / S288c) (Baker's yeast).